Consider the following 298-residue polypeptide: Cyclin-dependent kinase 2 (298 aa).

In terms of domain architecture, Protein kinase spans 4–286 (FQKVEKIGEG…AKNALVHRFF (283 aa)). Residues 10-18 (IGEGTYGVV), Lys-33, 81-83 (EFL), and Asp-86 contribute to the ATP site. Thr-14 is modified (phosphothreonine). Tyr-15 is modified (phosphotyrosine). Residue Asp-127 is the Proton acceptor of the active site. Residues 129-132 (KPQN) and Asp-145 contribute to the ATP site. Thr-160 bears the Phosphothreonine; by CAK mark.

It belongs to the protein kinase superfamily. CMGC Ser/Thr protein kinase family. CDC2/CDKX subfamily.

It catalyses the reaction L-seryl-[protein] + ATP = O-phospho-L-seryl-[protein] + ADP + H(+). The catalysed reaction is L-threonyl-[protein] + ATP = O-phospho-L-threonyl-[protein] + ADP + H(+). Its activity is regulated as follows. Phosphorylation at Thr-14 or Tyr-15 inactivates the enzyme, while phosphorylation at Thr-160 activates it. In terms of biological role, serine/threonine-protein kinase involved in the control of the cell cycle; essential for meiosis, but dispensable for mitosis. Triggers duplication of centrosomes and DNA. Acts at the G1-S transition to promote the E2F transcriptional program and the initiation of DNA synthesis, and modulates G2 progression; controls the timing of entry into mitosis/meiosis by controlling the subsequent activation of cyclin B/CDK1 by phosphorylation, and coordinates the activation of cyclin B/CDK1 at the centrosome and in the nucleus. Crucial role in orchestrating a fine balance between cellular proliferation, cell death, and DNA repair in embryonic stem cells (ESCs). Activity of CDK2 is maximal during S phase and G2; activated by interaction with cyclin E during the early stages of DNA synthesis to permit G1-S transition, and subsequently activated by cyclin A2 (cyclin A1 in germ cells) during the late stages of DNA replication to drive the transition from S phase to mitosis, the G2 phase. This is Cyclin-dependent kinase 2 (cdk2) from Carassius auratus (Goldfish).